A 240-amino-acid chain; its full sequence is Small ribosomal subunit protein uS3 (240 aa).

In terms of domain architecture, KH type-2 spans 39–107; sequence IREFIKEECK…ELHLNIVEVR (69 aa). Residues 212 to 222 are compositionally biased toward basic and acidic residues; sequence PQARDRRHAEL. Residues 212–240 are disordered; sequence PQARDRRHAELQEGGGPRPQGGGRPRRDR. A compositionally biased stretch (gly residues) spans 224–234; it reads EGGGPRPQGGG.

Belongs to the universal ribosomal protein uS3 family. As to quaternary structure, part of the 30S ribosomal subunit. Forms a tight complex with proteins S10 and S14.

Its function is as follows. Binds the lower part of the 30S subunit head. Binds mRNA in the 70S ribosome, positioning it for translation. The sequence is that of Small ribosomal subunit protein uS3 from Dinoroseobacter shibae (strain DSM 16493 / NCIMB 14021 / DFL 12).